The chain runs to 465 residues: Glutamate--tRNA ligase 1 (465 aa).

A 'HIGH' region motif is present at residues 8-18; it reads PSPTGNLHIGG. The short motif at 236–240 is the 'KMSKS' region element; it reads KLSKR. An ATP-binding site is contributed by Lys-239.

Belongs to the class-I aminoacyl-tRNA synthetase family. Glutamate--tRNA ligase type 1 subfamily. In terms of assembly, monomer.

It localises to the cytoplasm. The catalysed reaction is tRNA(Glu) + L-glutamate + ATP = L-glutamyl-tRNA(Glu) + AMP + diphosphate. In terms of biological role, catalyzes the attachment of glutamate to tRNA(Glu) in a two-step reaction: glutamate is first activated by ATP to form Glu-AMP and then transferred to the acceptor end of tRNA(Glu). The chain is Glutamate--tRNA ligase 1 from Wolinella succinogenes (strain ATCC 29543 / DSM 1740 / CCUG 13145 / JCM 31913 / LMG 7466 / NCTC 11488 / FDC 602W) (Vibrio succinogenes).